We begin with the raw amino-acid sequence, 96 residues long: Co-chaperonin GroES (96 aa).

This sequence belongs to the GroES chaperonin family. As to quaternary structure, heptamer of 7 subunits arranged in a ring. Interacts with the chaperonin GroEL.

The protein resides in the cytoplasm. Its function is as follows. Together with the chaperonin GroEL, plays an essential role in assisting protein folding. The GroEL-GroES system forms a nano-cage that allows encapsulation of the non-native substrate proteins and provides a physical environment optimized to promote and accelerate protein folding. GroES binds to the apical surface of the GroEL ring, thereby capping the opening of the GroEL channel. The chain is Co-chaperonin GroES from Myxococcus xanthus (strain DK1622).